The primary structure comprises 135 residues: Protein PsiE homolog (135 aa).

A run of 4 helical transmembrane segments spans residues 13–33 (VLQW…VIFL), 54–74 (YMLV…ALIV), 82–102 (HFPL…LIIV), and 107–127 (PNDT…LYLA).

It belongs to the PsiE family.

The protein resides in the cell inner membrane. The protein is Protein PsiE homolog of Edwardsiella ictaluri (strain 93-146).